A 457-amino-acid polypeptide reads, in one-letter code: F-box/LRR-repeat protein At2g42730 (457 aa).

An F-box domain is found at 4–50 (KDVISRLPDEVLGRILSLISTKEAVSTSVLSKRWKNMFVLVSNLDID). 3 LRR repeats span residues 265-288 (MDET…MRNL), 292-315 (IRNV…CKEM), and 318-343 (FDSL…LIKN).

The polypeptide is F-box/LRR-repeat protein At2g42730 (Arabidopsis thaliana (Mouse-ear cress)).